Consider the following 247-residue polypeptide: Aliphatic sulfonates import ATP-binding protein SsuB 3 (247 aa).

One can recognise an ABC transporter domain in the interval 13 to 227 (VRVRGAGRAF…SVVDPEFSAL (215 aa)). ATP is bound at residue 45–52 (GASGSGKS).

The protein belongs to the ABC transporter superfamily. Aliphatic sulfonates importer (TC 3.A.1.17.2) family. The complex is composed of two ATP-binding proteins (SsuB), two transmembrane proteins (SsuC) and a solute-binding protein (SsuA).

The protein resides in the cell membrane. It carries out the reaction ATP + H2O + aliphatic sulfonate-[sulfonate-binding protein]Side 1 = ADP + phosphate + aliphatic sulfonateSide 2 + [sulfonate-binding protein]Side 1.. Part of the ABC transporter complex SsuABC involved in aliphatic sulfonates import. Responsible for energy coupling to the transport system. The polypeptide is Aliphatic sulfonates import ATP-binding protein SsuB 3 (Nocardia farcinica (strain IFM 10152)).